The primary structure comprises 644 residues: 1-deoxy-D-xylulose-5-phosphate synthase (644 aa).

Thiamine diphosphate contacts are provided by residues His72 and 113–115 (GHA). Position 144 (Asp144) interacts with Mg(2+). Residues 145 to 146 (GA), Asn174, Tyr287, and Glu370 contribute to the thiamine diphosphate site. Asn174 contributes to the Mg(2+) binding site.

Belongs to the transketolase family. DXPS subfamily. In terms of assembly, homodimer. Requires Mg(2+) as cofactor. Thiamine diphosphate serves as cofactor.

The catalysed reaction is D-glyceraldehyde 3-phosphate + pyruvate + H(+) = 1-deoxy-D-xylulose 5-phosphate + CO2. The protein operates within metabolic intermediate biosynthesis; 1-deoxy-D-xylulose 5-phosphate biosynthesis; 1-deoxy-D-xylulose 5-phosphate from D-glyceraldehyde 3-phosphate and pyruvate: step 1/1. In terms of biological role, catalyzes the acyloin condensation reaction between C atoms 2 and 3 of pyruvate and glyceraldehyde 3-phosphate to yield 1-deoxy-D-xylulose-5-phosphate (DXP). The protein is 1-deoxy-D-xylulose-5-phosphate synthase of Prochlorococcus marinus (strain MIT 9303).